Reading from the N-terminus, the 453-residue chain is tRNA modification GTPase MnmE (453 aa).

(6S)-5-formyl-5,6,7,8-tetrahydrofolate is bound by residues arginine 28, glutamate 86, and lysine 125. A TrmE-type G domain is found at 221 to 375; the sequence is GIKIAIVGEP…LIKYLEETSL (155 aa). Asparagine 231 is a binding site for K(+). GTP contacts are provided by residues 231 to 236, 250 to 256, and 276 to 279; these read NAGKSS, TNIPGTT, and DTAG. Serine 235 contributes to the Mg(2+) binding site. Threonine 250, isoleucine 252, and threonine 255 together coordinate K(+). Position 256 (threonine 256) interacts with Mg(2+). Lysine 453 is a (6S)-5-formyl-5,6,7,8-tetrahydrofolate binding site.

Belongs to the TRAFAC class TrmE-Era-EngA-EngB-Septin-like GTPase superfamily. TrmE GTPase family. Homodimer. Heterotetramer of two MnmE and two MnmG subunits. It depends on K(+) as a cofactor.

The protein resides in the cytoplasm. Exhibits a very high intrinsic GTPase hydrolysis rate. Involved in the addition of a carboxymethylaminomethyl (cmnm) group at the wobble position (U34) of certain tRNAs, forming tRNA-cmnm(5)s(2)U34. This is tRNA modification GTPase MnmE from Mycoplasmoides gallisepticum (strain R(low / passage 15 / clone 2)) (Mycoplasma gallisepticum).